A 251-amino-acid polypeptide reads, in one-letter code: Small ribosomal subunit protein uS2 (251 aa).

Serine 2 is subject to N-acetylserine. Residues 213–251 form a disordered region; the sequence is QVAEEATAAADEDVKEEVAEEQTEAADWAEGNTEEVASW. A compositionally biased stretch (acidic residues) spans 222–236; sequence ADEDVKEEVAEEQTE.

The protein belongs to the universal ribosomal protein uS2 family. Component of the small ribosomal subunit. Mature ribosomes consist of a small (40S) and a large (60S) subunit. The 40S subunit contains about 33 different proteins and 1 molecule of RNA (18S). The 60S subunit contains about 49 different proteins and 3 molecules of RNA (25S, 5.8S and 5S). Interacts with RPS21.

The protein localises to the cytoplasm. Its function is as follows. Required for the assembly and/or stability of the 40S ribosomal subunit. Required for the processing of the 20S rRNA-precursor to mature 18S rRNA in a late step of the maturation of 40S ribosomal subunits. The sequence is that of Small ribosomal subunit protein uS2 from Lachancea thermotolerans (strain ATCC 56472 / CBS 6340 / NRRL Y-8284) (Yeast).